A 552-amino-acid polypeptide reads, in one-letter code: Mothers against decapentaplegic homolog 4 (552 aa).

The interval 1 to 322 (MDNMSITNTP…PISNHPAPEY (322 aa)) is mediates interaction with ZBTB7A. Residues 18–142 (SIVHSLMCHR…YERVVSPGID (125 aa)) enclose the MH1 domain. K37 is modified (N6-acetyllysine). The segment at 44–69 (VKKLKEKKDELDSLITAITTNGAHPS) is required for interaction with TSC22D1. C71 contributes to the Zn(2+) binding site. K113 is covalently cross-linked (Glycyl lysine isopeptide (Lys-Gly) (interchain with G-Cter in SUMO2)). 3 residues coordinate Zn(2+): C115, C127, and H132. The segment at 167 to 193 (EGQPSLPTEGHSIQTIQHPPSNRASTE) is disordered. Residues 177-193 (HSIQTIQHPPSNRASTE) are compositionally biased toward polar residues. Residues 275–320 (PYTPNLPHHQNGHLQHHPPMPPHPGHYWPVHNELAFQPPISNHPAP) form an SAD region. Residues 323-552 (WCSIAYFEMD…MPIADPQPLD (230 aa)) form the MH2 domain. K428 and K507 each carry N6-acetyllysine. K519 participates in a covalent cross-link: Glycyl lysine isopeptide (Lys-Gly) (interchain with G-Cter in ubiquitin).

Belongs to the dwarfin/SMAD family. As to quaternary structure, monomer; in the absence of TGF-beta activation. Heterotrimer; on TGF-beta activation. Heterotrimer composed of two molecules of a C-terminally phosphorylated R-SMAD molecule, SMAD2 or SMAD3, and one molecule of SMAD4 to form the transcriptional active SMAD2/SMAD3-SMAD4 complex. Found in a ternary complex composed of SMAD4, STK11/LKB1 and STK11IP. Found in a complex with SMAD1 and YY1. Identified in a complex that contains at least ZNF451, SMAD2, SMAD3 and SMAD4. Interacts with ATF2, COPS5, DACH1, MSG1, SKI, STK11/LKB1, STK11IP and TRIM33. Associates with ZNF423 or ZNF521 in response to BMP2 leading to activate transcription of BMP target genes. Interacts with USP9X. Interacts with RBPMS. Interacts with WWTR1 (via coiled-coil domain). Interacts with CITED1 and CITED2. Interacts with PDPK1 (via PH domain). Interacts with VPS39; this interaction affects heterodimer formation with SMAD3, but not with SMAD2, and leads to inhibition of SMAD3-dependent transcription activation. Interactions with VPS39 and SMAD2 may be mutually exclusive. Interacts (via MH2 domain) with ZNF451 (via N-terminal zinc-finger domains). Interacts with ZC3H3. Interacts weakly with ZNF8. Interacts with NUP93 and IPO7; translocates SMAD4 to the nucleus through the NPC upon BMP7 stimulation resulting in activation of SMAD4 signaling. Interacts with CREB3L1, the interaction takes place upon TGFB1 induction and SMAD4 acts as a CREB3L1 coactivator to induce the expression of genes involved in the assembly of collagen extracellular matrix. Interacts with DLX1. Interacts with ZBTB7A; the interaction is direct and stimulated by TGFB1. Interacts with CREBBP; the recruitment of this transcriptional coactivator is negatively regulated by ZBTB7A. Interacts with EP300; the interaction with this transcriptional coactivator is negatively regulated by ZBTB7A. Interacts with HDAC1. Interacts (via MH2 domain) with ZMIZ1 (via SP-RING-type domain); in the TGF-beta signaling pathway increases the activity of the SMAD3/SMAD4 transcriptional complex. Interacts (via N-terminus) with TSC22D1. In terms of processing, phosphorylated by PDPK1. Post-translationally, monoubiquitinated on Lys-519 by E3 ubiquitin-protein ligase TRIM33. Monoubiquitination hampers its ability to form a stable complex with activated SMAD2/3 resulting in inhibition of TGF-beta/BMP signaling cascade. Deubiquitination by USP9X restores its competence to mediate TGF-beta signaling.

Its subcellular location is the cytoplasm. The protein resides in the nucleus. In terms of biological role, common SMAD (co-SMAD) is the coactivator and mediator of signal transduction by TGF-beta (transforming growth factor). Component of the heterotrimeric SMAD2/SMAD3-SMAD4 complex that forms in the nucleus and is required for the TGF-mediated signaling. Promotes binding of the SMAD2/SMAD4/FAST-1 complex to DNA and provides an activation function required for SMAD1 or SMAD2 to stimulate transcription. Component of the multimeric SMAD3/SMAD4/JUN/FOS complex which forms at the AP1 promoter site; required for synergistic transcriptional activity in response to TGF-beta. Acts synergistically with SMAD1 and YY1 in bone morphogenetic protein (BMP)-mediated cardiac-specific gene expression. Binds to SMAD binding elements (SBEs) (5'-GTCT/AGAC-3') within BMP response element (BMPRE) of cardiac activating regions. May act as a tumor suppressor. Positively regulates PDPK1 kinase activity by stimulating its dissociation from the 14-3-3 protein YWHAQ which acts as a negative regulator. In muscle physiology, plays a central role in the balance between atrophy and hypertrophy. When recruited by MSTN, promotes atrophy response via phosphorylated SMAD2/4. MSTN decrease causes SMAD4 release and subsequent recruitment by the BMP pathway to promote hypertrophy via phosphorylated SMAD1/5/8. In Rattus norvegicus (Rat), this protein is Mothers against decapentaplegic homolog 4 (Smad4).